Consider the following 101-residue polypeptide: Large ribosomal subunit protein uL6m (101 aa).

The protein belongs to the universal ribosomal protein uL6 family.

Its subcellular location is the mitochondrion. The sequence is that of Large ribosomal subunit protein uL6m (RPL6) from Marchantia polymorpha (Common liverwort).